Here is a 213-residue protein sequence, read N- to C-terminus: ATP phosphoribosyltransferase (213 aa).

The protein belongs to the ATP phosphoribosyltransferase family. Short subfamily. Heteromultimer composed of HisG and HisZ subunits.

It is found in the cytoplasm. The catalysed reaction is 1-(5-phospho-beta-D-ribosyl)-ATP + diphosphate = 5-phospho-alpha-D-ribose 1-diphosphate + ATP. Its pathway is amino-acid biosynthesis; L-histidine biosynthesis; L-histidine from 5-phospho-alpha-D-ribose 1-diphosphate: step 1/9. Catalyzes the condensation of ATP and 5-phosphoribose 1-diphosphate to form N'-(5'-phosphoribosyl)-ATP (PR-ATP). Has a crucial role in the pathway because the rate of histidine biosynthesis seems to be controlled primarily by regulation of HisG enzymatic activity. This chain is ATP phosphoribosyltransferase, found in Listeria monocytogenes serotype 4b (strain F2365).